Reading from the N-terminus, the 361-residue chain is Peptide chain release factor 1 (361 aa).

Glutamine 235 bears the N5-methylglutamine mark.

Belongs to the prokaryotic/mitochondrial release factor family. In terms of processing, methylated by PrmC. Methylation increases the termination efficiency of RF1.

Its subcellular location is the cytoplasm. Peptide chain release factor 1 directs the termination of translation in response to the peptide chain termination codons UAG and UAA. The chain is Peptide chain release factor 1 from Chlamydia abortus (strain DSM 27085 / S26/3) (Chlamydophila abortus).